Reading from the N-terminus, the 670-residue chain is Transcription factor vib-1 (670 aa).

A DNA-binding region (NDT80) is located at residues 106-341; it reads TEMVQDLRDD…RSPRNFQARK (236 aa). Composition is skewed to polar residues over residues 394 to 438 and 553 to 568; these read FTSA…TTSM and LGNS…QHHP. Disordered stretches follow at residues 394 to 457 and 496 to 670; these read FTSA…SYTA and SAPP…WNAT. Residues 592-605 show a composition bias toward low complexity; it reads ASAPASAPTSAAPP. Polar residues predominate over residues 611–631; the sequence is PSQSWTSTAGEGQTSSYTNGG.

The protein localises to the nucleus. It localises to the cytoplasm. Transcription factor that acts as a positive regulator of nonrepressible acid phosphatase activity. Is a major regulator of responses to nitrogen and carbon starvation and is essential for the expression of genes involved in vegetative incompatibility (like pin-c, het-6, and tol). Vegetative incompatibility is a non-self-recognition system ubiquitous in filamentous fungi which results in programmed cell death. The sequence is that of Transcription factor vib-1 (vib-1) from Neurospora crassa (strain ATCC 24698 / 74-OR23-1A / CBS 708.71 / DSM 1257 / FGSC 987).